The primary structure comprises 179 residues: X-linked lymphocyte-regulated protein 5C (179 aa).

The segment covering 1–11 (MSNKEQKDMKK) has biased composition (basic and acidic residues). The disordered stretch occupies residues 1–75 (MSNKEQKDMK…MQDFKGDDGT (75 aa)). A compositionally biased stretch (low complexity) spans 42–53 (GTSGMGSHSSGS). Basic and acidic residues predominate over residues 56-75 (QEAREPVQKKMQDFKGDDGT). Positions 146 to 175 (ITQQQMKILQTAIEDHETKLKNAKDMCDTF) form a coiled coil.

This sequence belongs to the XLR/SYCP3 family. As to expression, expressed in testis (at protein level). Also expressed in ovary. Not detected in other tissues tested.

The protein resides in the nucleus. Its subcellular location is the chromosome. This Mus musculus (Mouse) protein is X-linked lymphocyte-regulated protein 5C.